We begin with the raw amino-acid sequence, 224 residues long: Peptidyl-prolyl cis-trans isomerase FKBP3 (224 aa).

The residue at position 2 (alanine 2) is an N-acetylalanine. Position 36 is a phosphoserine (serine 36). Over residues 89 to 102 (KLNEDKPKETKSEE) the composition is skewed to basic and acidic residues. The tract at residues 89 to 113 (KLNEDKPKETKSEETLDEGPPKYTK) is disordered. Lysine 99 carries the post-translational modification N6-acetyllysine. The 97-residue stretch at 128–224 (GDVVHCWYTG…IFEVELVDID (97 aa)) folds into the PPIase FKBP-type domain. Serine 152 is subject to Phosphoserine. Residue lysine 170 is modified to N6-acetyllysine.

Belongs to the FKBP-type PPIase family.

It localises to the nucleus. The enzyme catalyses [protein]-peptidylproline (omega=180) = [protein]-peptidylproline (omega=0). Inhibited preferentially by rapamycin over FK506. Functionally, FK506- and rapamycin-binding proteins (FKBPs) constitute a family of receptors for the two immunosuppressants which inhibit T-cell proliferation by arresting two dinstinct cytoplasmic signal transmission pathways. PPIases accelerate the folding of proteins. This chain is Peptidyl-prolyl cis-trans isomerase FKBP3 (FKBP3), found in Bos taurus (Bovine).